The following is a 557-amino-acid chain: NADP-dependent malic enzyme (557 aa).

Catalysis depends on Tyr91, which acts as the Proton donor. Residue Arg144 participates in NADP(+) binding. Lys162 serves as the catalytic Proton acceptor. Residues Glu234, Asp235, and Asp258 each coordinate a divalent metal cation. Residues Asp258, 290-307, and Asn397 contribute to the NADP(+) site; that span reads GAGE…MAME.

Belongs to the malic enzymes family. As to quaternary structure, homotetramer. The cofactor is Mg(2+). Requires Mn(2+) as cofactor.

It is found in the cytoplasm. It carries out the reaction (S)-malate + NADP(+) = pyruvate + CO2 + NADPH. The enzyme catalyses oxaloacetate + H(+) = pyruvate + CO2. The sequence is that of NADP-dependent malic enzyme (ME1) from Anas platyrhynchos (Mallard).